Here is a 208-residue protein sequence, read N- to C-terminus: Ribosomal RNA small subunit methyltransferase G (208 aa).

S-adenosyl-L-methionine-binding positions include G78, F83, 101 to 103 (ERS), 129 to 130 (IE), and R142.

Belongs to the methyltransferase superfamily. RNA methyltransferase RsmG family.

It localises to the cytoplasm. In terms of biological role, specifically methylates the N7 position of a guanine in 16S rRNA. This chain is Ribosomal RNA small subunit methyltransferase G, found in Borrelia garinii subsp. bavariensis (strain ATCC BAA-2496 / DSM 23469 / PBi) (Borreliella bavariensis).